The chain runs to 604 residues: Aspartate--tRNA(Asp/Asn) ligase (604 aa).

Residue Glu-168 coordinates L-aspartate. Positions Gln-192–Lys-195 are aspartate. Arg-214 provides a ligand contact to L-aspartate. Residues Arg-214 to Glu-216 and Gln-223 contribute to the ATP site. An L-aspartate-binding site is contributed by His-446. Glu-480 lines the ATP pocket. Residue Arg-487 participates in L-aspartate binding. Residue Gly-532–Arg-535 participates in ATP binding. Residues Leu-575–Thr-604 form a disordered region. Residues Ala-577–Ala-587 show a composition bias toward basic and acidic residues. Residues Arg-588 to Thr-604 are compositionally biased toward low complexity.

It belongs to the class-II aminoacyl-tRNA synthetase family. Type 1 subfamily. In terms of assembly, homodimer.

The protein resides in the cytoplasm. The enzyme catalyses tRNA(Asx) + L-aspartate + ATP = L-aspartyl-tRNA(Asx) + AMP + diphosphate. Aspartyl-tRNA synthetase with relaxed tRNA specificity since it is able to aspartylate not only its cognate tRNA(Asp) but also tRNA(Asn). Reaction proceeds in two steps: L-aspartate is first activated by ATP to form Asp-AMP and then transferred to the acceptor end of tRNA(Asp/Asn). This chain is Aspartate--tRNA(Asp/Asn) ligase, found in Salinispora arenicola (strain CNS-205).